A 572-amino-acid chain; its full sequence is Fusion glycoprotein F0 (572 aa).

An N-terminal signal peptide occupies residues 1–25 (MATTTMRMIISIILISTYVPHITLC). Over 26-522 (QNITEEFYQS…SVDVGKSTTN (497 aa)) the chain is Extracellular. N-linked (GlcNAc...) asparagine; by host glycosylation is found at asparagine 27 and asparagine 70. 7 disulfide bridges follow: cysteine 37–cysteine 437, cysteine 69–cysteine 212, cysteine 311–cysteine 341, cysteine 320–cysteine 331, cysteine 356–cysteine 365, cysteine 380–cysteine 391, and cysteine 414–cysteine 420. A coiled-coil region spans residues 76 to 96 (VKLIKQELERYNNAVAELQSL). The N-linked (GlcNAc...) asparagine; by host glycan is linked to asparagine 120. Positions 137-157 (FLGFLLGIGSAIASGVAVSKV) are fusion peptide. Residues 156–207 (KVLHLEGEVNKIKNALLSTNKAVVSLSNGVSVLTSKVLDLKNYIDKELLPKV) adopt a coiled-coil conformation. A coiled-coil region spans residues 479 to 514 (LVFPSDEFDASIAQVNAKINQSLAFIRRSDELLHSV). Asparagine 498 carries N-linked (GlcNAc...) asparagine; by host glycosylation. Residues 523-548 (VVITTIIIVIVVVILMLITVGLLFYC) form a helical membrane-spanning segment. A lipid anchor (S-palmitoyl cysteine; by host) is attached at cysteine 548. Over 549–572 (KTRSTPIMLGKDQLSSINNLSFSK) the chain is Cytoplasmic.

This sequence belongs to the paramyxoviruses fusion glycoprotein family. Homotrimer. Heterodimer with fusion protein F2; disulfide-linked. Part of a complex composed of F1, F2 and G glycoproteins. As a heterodimer with F2, interacts with host RHOA; this interaction facilitates virus-induced syncytium formation. As to quaternary structure, homotrimer. Heterodimer with fusion protein F1; disulfide-linked. Part of a complex composed of F1, F2 and G glycoproteins. As a heterodimer with F1, interacts with host RHOA; this interaction facilitates virus-induced syncytium formation. The F glycoprotein is synthesized as a F0 inactive precursor that is heavily N-glycosylated and processed at two sites by a host furin-like protease probably in the Golgi. The cleavage site between p27 and F1 may occur after endocytosis to yield the mature F1 and F2 proteins. Both cleavages are required for membrane fusion and p27 is released from the processed protein.

It is found in the host Golgi apparatus membrane. It localises to the virion membrane. The protein localises to the host cell membrane. Functionally, inactive precursor that is cleaved at two sites by a furin-like protease to give rise to the mature F1 and F2 fusion glycoproteins. In terms of biological role, class I viral fusion protein. Under the current model, the protein has at least 3 conformational states: pre-fusion native state, pre-hairpin intermediate state, and post-fusion hairpin state. During viral and plasma cell membrane fusion, the coiled coil regions assume a trimer-of-hairpins structure, positioning the fusion peptide in close proximity to the C-terminal region of the ectodomain. The formation of this structure appears to drive apposition and subsequent fusion of viral and cellular membranes leading to delivery of the nucleocapsid into the cytoplasm. This fusion is pH independent and occurs at the plasma or endosomal membrane. The trimer of F1-F2 (F protein) also facilitates the attachment and entry into the host cell. Later in infection, F protein expressed at the plasma membrane of infected cells can mediate fusion with adjacent cells to form syncytia, a cytopathic effect that could lead to tissue necrosis. Major determinant of the species specificity of RSV infection. The trimer of F1-F2 (F protein) also facilitates the attachment and entry into the host cell. Later in infection, F protein expressed at the plasma membrane of infected cells can mediate fusion with adjacent cells to form syncytia, a cytopathic effect that could lead to tissue necrosis. This is Fusion glycoprotein F0 (F) from Bovine respiratory syncytial virus (strain A51908) (BRS).